The sequence spans 322 residues: Phosphatidylserine decarboxylase proenzyme (322 aa).

Residues D90, H147, and S254 each act as charge relay system; for autoendoproteolytic cleavage activity in the active site. Catalysis depends on S254, which acts as the Schiff-base intermediate with substrate; via pyruvic acid; for decarboxylase activity. Residue S254 is modified to Pyruvic acid (Ser); by autocatalysis. The tract at residues 294–322 (EVEPAPLPADEIKAEHDASPLVDNKKDDT) is disordered. The span at 303 to 322 (DEIKAEHDASPLVDNKKDDT) shows a compositional bias: basic and acidic residues.

It belongs to the phosphatidylserine decarboxylase family. PSD-B subfamily. Prokaryotic type I sub-subfamily. As to quaternary structure, heterodimer of a large membrane-associated beta subunit and a small pyruvoyl-containing alpha subunit. Requires pyruvate as cofactor. Is synthesized initially as an inactive proenzyme. Formation of the active enzyme involves a self-maturation process in which the active site pyruvoyl group is generated from an internal serine residue via an autocatalytic post-translational modification. Two non-identical subunits are generated from the proenzyme in this reaction, and the pyruvate is formed at the N-terminus of the alpha chain, which is derived from the carboxyl end of the proenzyme. The autoendoproteolytic cleavage occurs by a canonical serine protease mechanism, in which the side chain hydroxyl group of the serine supplies its oxygen atom to form the C-terminus of the beta chain, while the remainder of the serine residue undergoes an oxidative deamination to produce ammonia and the pyruvoyl prosthetic group on the alpha chain. During this reaction, the Ser that is part of the protease active site of the proenzyme becomes the pyruvoyl prosthetic group, which constitutes an essential element of the active site of the mature decarboxylase.

The protein localises to the cell membrane. It carries out the reaction a 1,2-diacyl-sn-glycero-3-phospho-L-serine + H(+) = a 1,2-diacyl-sn-glycero-3-phosphoethanolamine + CO2. The protein operates within phospholipid metabolism; phosphatidylethanolamine biosynthesis; phosphatidylethanolamine from CDP-diacylglycerol: step 2/2. Its function is as follows. Catalyzes the formation of phosphatidylethanolamine (PtdEtn) from phosphatidylserine (PtdSer). The chain is Phosphatidylserine decarboxylase proenzyme from Salmonella paratyphi C (strain RKS4594).